Reading from the N-terminus, the 71-residue chain is UPF0346 protein SUB0487 (71 aa).

Belongs to the UPF0346 family.

In Streptococcus uberis (strain ATCC BAA-854 / 0140J), this protein is UPF0346 protein SUB0487.